Here is a 95-residue protein sequence, read N- to C-terminus: Small ribosomal subunit protein bS18 (95 aa).

Belongs to the bacterial ribosomal protein bS18 family. As to quaternary structure, part of the 30S ribosomal subunit. Forms a tight heterodimer with protein bS6.

Binds as a heterodimer with protein bS6 to the central domain of the 16S rRNA, where it helps stabilize the platform of the 30S subunit. The sequence is that of Small ribosomal subunit protein bS18 from Rickettsia massiliae (strain Mtu5).